Here is a 506-residue protein sequence, read N- to C-terminus: Galactose/methyl galactoside import ATP-binding protein MglA (506 aa).

ABC transporter domains lie at 14–249 (LEMS…VGRS) and 264–506 (VILE…SLHL). 46-53 (GENGAGKS) is a binding site for ATP.

It belongs to the ABC transporter superfamily. Galactose/methyl galactoside importer (TC 3.A.1.2.3) family. In terms of assembly, the complex is composed of one ATP-binding protein (MglA), two transmembrane proteins (MglC) and a solute-binding protein (MglB).

The protein localises to the cell inner membrane. It carries out the reaction D-galactose(out) + ATP + H2O = D-galactose(in) + ADP + phosphate + H(+). The enzyme catalyses methyl beta-D-galactoside(out) + ATP + H2O = methyl beta-D-galactoside(in) + ADP + phosphate + H(+). Functionally, part of the ABC transporter complex MglABC involved in galactose/methyl galactoside import. Responsible for energy coupling to the transport system. The chain is Galactose/methyl galactoside import ATP-binding protein MglA from Shigella flexneri serotype 5b (strain 8401).